The chain runs to 60 residues: Sec-independent protein translocase protein TatA (60 aa).

A helical membrane pass occupies residues 1 to 21 (MLSNIGVPGLILILVIALVIF).

This sequence belongs to the TatA/E family. As to quaternary structure, forms a complex with TatC.

The protein localises to the cell membrane. Its function is as follows. Part of the twin-arginine translocation (Tat) system that transports large folded proteins containing a characteristic twin-arginine motif in their signal peptide across membranes. TatA could form the protein-conducting channel of the Tat system. This Anoxybacillus flavithermus (strain DSM 21510 / WK1) protein is Sec-independent protein translocase protein TatA.